Here is a 167-residue protein sequence, read N- to C-terminus: Small ribosomal subunit protein uS9 (167 aa).

Disordered stretches follow at residues 1 to 45 (MSEY…GGAT) and 137 to 167 (KAGF…FSKR). Over residues 9–19 (DTVEDITESDE) the composition is skewed to acidic residues. The span at 20-36 (FTGTYTSESSTPATGGN) shows a compositional bias: polar residues. Residues 143–152 (RDPRATERKK) show a composition bias toward basic and acidic residues. The span at 153–167 (AGLKKARKAPQFSKR) shows a compositional bias: basic residues.

Belongs to the universal ribosomal protein uS9 family.

This is Small ribosomal subunit protein uS9 from Kineococcus radiotolerans (strain ATCC BAA-149 / DSM 14245 / SRS30216).